We begin with the raw amino-acid sequence, 372 residues long: Pepsin A (372 aa).

Residues 1 to 42 constitute a propeptide, activation peptide; that stretch reads MSVVKIPLVKKKSLRQNLIENGKLKEFMRTHKYNLGSKYIRE. The region spanning 60–369 is the Peptidase A1 domain; that stretch reads YFGTIGIGTP…DRGNNQIGLA (310 aa). Residue Asp78 is part of the active site. Cys91 and Cys96 are oxidised to a cystine. Residue Ser114 is modified to Phosphoserine. A disulfide bond links Cys252 and Cys256. Asp261 is a catalytic residue. A disulfide bridge connects residues Cys295 and Cys328.

It belongs to the peptidase A1 family.

Its subcellular location is the secreted. It carries out the reaction Preferential cleavage: hydrophobic, preferably aromatic, residues in P1 and P1' positions. Cleaves 1-Phe-|-Val-2, 4-Gln-|-His-5, 13-Glu-|-Ala-14, 14-Ala-|-Leu-15, 15-Leu-|-Tyr-16, 16-Tyr-|-Leu-17, 23-Gly-|-Phe-24, 24-Phe-|-Phe-25 and 25-Phe-|-Tyr-26 bonds in the B chain of insulin.. Its function is as follows. Shows particularly broad specificity; although bonds involving phenylalanine and leucine are preferred, many others are also cleaved to some extent. This Bos taurus (Bovine) protein is Pepsin A (PGA).